A 113-amino-acid polypeptide reads, in one-letter code: Nucleoid-associated protein Athe_1143 (113 aa).

Belongs to the YbaB/EbfC family. As to quaternary structure, homodimer.

It localises to the cytoplasm. It is found in the nucleoid. Binds to DNA and alters its conformation. May be involved in regulation of gene expression, nucleoid organization and DNA protection. In Caldicellulosiruptor bescii (strain ATCC BAA-1888 / DSM 6725 / KCTC 15123 / Z-1320) (Anaerocellum thermophilum), this protein is Nucleoid-associated protein Athe_1143.